Here is a 277-residue protein sequence, read N- to C-terminus: Large ribosomal subunit protein uL2c (277 aa).

The segment at 225 to 277 is disordered; sequence MNPCDHPHGGGEGRSPIGRPKPVTPWGKPALGKKTRSPKRFSNKYIIRSRKMV. Over residues 255–277 the composition is skewed to basic residues; sequence LGKKTRSPKRFSNKYIIRSRKMV.

Belongs to the universal ribosomal protein uL2 family. Part of the 50S ribosomal subunit.

Its subcellular location is the plastid. It is found in the chloroplast. The chain is Large ribosomal subunit protein uL2c (rpl2) from Euglena gracilis.